An 844-amino-acid polypeptide reads, in one-letter code: Neuronal PAS domain-containing protein 4B (844 aa).

A basic motif; degenerate region spans residues 61–74 (KMYRSTKGASKARR). The bHLH domain maps to 61–114 (KMYRSTKGASKARRDQINAEIRSLKELLPISDADKARLSYLHIMSLACIYTRKS). The segment at 75–114 (DQINAEIRSLKELLPISDADKARLSYLHIMSLACIYTRKS) is helix-loop-helix motif. PAS domains follow at residues 132 to 190 (SLPE…PVDH) and 294 to 343 (DMRI…LHNG). A compositionally biased stretch (polar residues) spans 410 to 422 (SRQSSDPLSSPDQ). Disordered stretches follow at residues 410–432 (SRQS…SGLS), 444–479 (GRSS…GGGH), 702–725 (PLPN…SYSQ), and 757–784 (TEGG…EAPA). Residues 704-716 (PNLPSPSPVPPSP) show a composition bias toward pro residues.

In terms of assembly, efficient DNA binding requires dimerization with another bHLH protein.

Its subcellular location is the nucleus. Transcription factor expressed in neurons of the brain that regulates the excitatory-inhibitory balance within neural circuits and is required for contextual memory in the hippocampus. Plays a key role in the structural and functional plasticity of neurons. Acts as an early-response transcription factor in both excitatory and inhibitory neurons, where it induces distinct but overlapping sets of late-response genes in these two types of neurons, allowing the synapses that form on inhibitory and excitatory neurons to be modified by neuronal activity in a manner specific to their function within a circuit, thereby facilitating appropriate circuit responses to sensory experience. In Danio rerio (Zebrafish), this protein is Neuronal PAS domain-containing protein 4B (npas4b).